The chain runs to 145 residues: D-aminoacyl-tRNA deacylase (145 aa).

Positions 137 to 138 (GP) match the Gly-cisPro motif, important for rejection of L-amino acids motif.

The protein belongs to the DTD family. As to quaternary structure, homodimer.

It is found in the cytoplasm. It catalyses the reaction glycyl-tRNA(Ala) + H2O = tRNA(Ala) + glycine + H(+). The catalysed reaction is a D-aminoacyl-tRNA + H2O = a tRNA + a D-alpha-amino acid + H(+). Its function is as follows. An aminoacyl-tRNA editing enzyme that deacylates mischarged D-aminoacyl-tRNAs. Also deacylates mischarged glycyl-tRNA(Ala), protecting cells against glycine mischarging by AlaRS. Acts via tRNA-based rather than protein-based catalysis; rejects L-amino acids rather than detecting D-amino acids in the active site. By recycling D-aminoacyl-tRNA to D-amino acids and free tRNA molecules, this enzyme counteracts the toxicity associated with the formation of D-aminoacyl-tRNA entities in vivo and helps enforce protein L-homochirality. This Shewanella sp. (strain ANA-3) protein is D-aminoacyl-tRNA deacylase.